The primary structure comprises 308 residues: UDP-N-acetylenolpyruvoylglucosamine reductase (308 aa).

In terms of domain architecture, FAD-binding PCMH-type spans 33 to 197 (TGGNADFYLS…LEASFNLAPG (165 aa)). The active site involves Arg-176. The active-site Proton donor is Ser-226. The active site involves Glu-296.

This sequence belongs to the MurB family. FAD serves as cofactor.

It is found in the cytoplasm. It catalyses the reaction UDP-N-acetyl-alpha-D-muramate + NADP(+) = UDP-N-acetyl-3-O-(1-carboxyvinyl)-alpha-D-glucosamine + NADPH + H(+). The protein operates within cell wall biogenesis; peptidoglycan biosynthesis. In terms of biological role, cell wall formation. The chain is UDP-N-acetylenolpyruvoylglucosamine reductase from Staphylococcus carnosus (strain TM300).